The following is a 142-amino-acid chain: uncharacterized protein (142 aa).

Residues Y75 to F91 form a helical membrane-spanning segment.

It is found in the membrane. This is an uncharacterized protein from Haemophilus influenzae (strain ATCC 51907 / DSM 11121 / KW20 / Rd).